The chain runs to 729 residues: uncharacterized protein (729 aa).

This is an uncharacterized protein from Caenorhabditis elegans.